We begin with the raw amino-acid sequence, 246 residues long: 4-hydroxy-tetrahydrodipicolinate reductase (246 aa).

NAD(+) is bound by residues 8-13, 74-76, and 101-104; these read GAKGRM, GTT, and APNF. The active-site Proton donor/acceptor is His-131. His-132 contacts (S)-2,3,4,5-tetrahydrodipicolinate. Lys-135 acts as the Proton donor in catalysis. 141–142 lines the (S)-2,3,4,5-tetrahydrodipicolinate pocket; it reads GT.

It belongs to the DapB family.

It is found in the cytoplasm. The enzyme catalyses (S)-2,3,4,5-tetrahydrodipicolinate + NAD(+) + H2O = (2S,4S)-4-hydroxy-2,3,4,5-tetrahydrodipicolinate + NADH + H(+). The catalysed reaction is (S)-2,3,4,5-tetrahydrodipicolinate + NADP(+) + H2O = (2S,4S)-4-hydroxy-2,3,4,5-tetrahydrodipicolinate + NADPH + H(+). Its pathway is amino-acid biosynthesis; L-lysine biosynthesis via DAP pathway; (S)-tetrahydrodipicolinate from L-aspartate: step 4/4. Its function is as follows. Catalyzes the conversion of 4-hydroxy-tetrahydrodipicolinate (HTPA) to tetrahydrodipicolinate. This Cutibacterium acnes (strain DSM 16379 / KPA171202) (Propionibacterium acnes) protein is 4-hydroxy-tetrahydrodipicolinate reductase.